The following is a 341-amino-acid chain: LRP2-binding protein (341 aa).

A TPR repeat occupies 56–89 (VQANFLLGQLFFEEGWYEDALLQFEKVKDEDNQA). Sel1-like repeat units follow at residues 90 to 122 (LYQA…TSDC), 130 to 165 (YAAA…DNGN), 170 to 203 (LKAQ…GNGS), 204 to 239 (LESQ…ERGN), 240 to 271 (VYAQ…SHDN), and 291 to 326 (AIAT…QLDA).

The protein localises to the cytoplasm. May act as an adapter that regulates LRP2 function. The chain is LRP2-binding protein (lrp2bp) from Xenopus laevis (African clawed frog).